A 423-amino-acid polypeptide reads, in one-letter code: uncharacterized protein (423 aa).

The segment at 383–423 (ARGTTGGGGTRSGTSTDGQEDGRKPPVVVIREQPPPGNPPR) is disordered.

The protein belongs to the mycobacterial PPE family.

This is an uncharacterized protein from Mycobacterium tuberculosis (strain CDC 1551 / Oshkosh).